Here is a 110-residue protein sequence, read N- to C-terminus: Iron-sulfur cluster assembly protein CyaY (110 aa).

This sequence belongs to the frataxin family.

Its function is as follows. Involved in iron-sulfur (Fe-S) cluster assembly. May act as a regulator of Fe-S biogenesis. The chain is Iron-sulfur cluster assembly protein CyaY from Pseudomonas entomophila (strain L48).